Here is a 274-residue protein sequence, read N- to C-terminus: Tyrosinase (274 aa).

Cu cation-binding residues include histidine 38, histidine 54, histidine 63, histidine 190, histidine 194, and histidine 216.

The protein belongs to the tyrosinase family. Requires Cu(2+) as cofactor.

It catalyses the reaction 2 L-dopa + O2 = 2 L-dopaquinone + 2 H2O. The enzyme catalyses L-tyrosine + O2 = L-dopaquinone + H2O. In terms of biological role, this is a copper-containing oxidase that functions in the formation of pigments such as melanins and other polyphenolic compounds. The protein is Tyrosinase (melC2) of Streptomyces glaucescens.